The following is a 298-amino-acid chain: 5,10-methylenetetrahydrofolate reductase (298 aa).

Glu28 serves as the catalytic Proton donor/acceptor. Thr59 provides a ligand contact to NADH. Tyr60, Ala62, His88, Arg118, Gly119, Asp120, Ala132, Tyr152, His156, Ala159, Asp165, Asn168, and Lys172 together coordinate FAD. Asp120 contributes to the (6S)-5-methyl-5,6,7,8-tetrahydrofolate binding site. Gln183 serves as a coordination point for NADH. The (6S)-5-methyl-5,6,7,8-tetrahydrofolate site is built by Gln183, Gln219, and Arg279.

The protein belongs to the methylenetetrahydrofolate reductase family. The cofactor is FAD.

It carries out the reaction (6S)-5-methyl-5,6,7,8-tetrahydrofolate + NAD(+) = (6R)-5,10-methylene-5,6,7,8-tetrahydrofolate + NADH + H(+). It functions in the pathway one-carbon metabolism; tetrahydrofolate interconversion. The protein operates within amino-acid biosynthesis; L-methionine biosynthesis via de novo pathway. In terms of biological role, catalyzes the NADH-dependent reduction of 5,10-methylenetetrahydrofolate to 5-methyltetrahydrofolate. Is required to provide the methyl group necessary for methionine synthetase to convert homocysteine to methionine; the methyl group is given by 5-methyltetrahydrofolate. This Pectobacterium carotovorum subsp. carotovorum (Erwinia carotovora subsp. carotovora) protein is 5,10-methylenetetrahydrofolate reductase (metF).